The chain runs to 298 residues: Transcription factor BOA (298 aa).

Disordered stretches follow at residues 1–26 (MGKEVMVSDYGDDDGEDAGGGDEYRI), 79–143 (LRSS…KRPR), and 206–232 (EDPYSSSDQLFSSTPVPPQSFQDGGGS). Positions 10–20 (YGDDDGEDAGG) are enriched in acidic residues. Residues 104-113 (DPKKQKKSDG) are compositionally biased toward basic and acidic residues. Acidic residues predominate over residues 122–131 (STAEEGDSGP). Residues 138–197 (TSKRPRLVWTPQLHKRFVDVVAHLGIKNAVPKTIMQLMNVEGLTRENVASHLQKYRLYLK) constitute a DNA-binding region (myb-like GARP). Polar residues predominate over residues 209–227 (YSSSDQLFSSTPVPPQSFQ).

The protein resides in the nucleus. Functionally, transcription factor that is a critical component of the regulatory circuit of the circadian clock. Binds to specific sites on CCA1 promoter leading to CCA1 activation. Is required for the rhythmic expression of other clock genes such as LHY, GI and APRR1/TOC1. The sequence is that of Transcription factor BOA (BOA) from Arabidopsis thaliana (Mouse-ear cress).